Reading from the N-terminus, the 325-residue chain is Proto-oncogene Mas (325 aa).

At Met1–His36 the chain is on the extracellular side. Asn5, Asn16, and Asn22 each carry an N-linked (GlcNAc...) asparagine glycan. A helical transmembrane segment spans residues Trp37 to Met61. At Arg62 to Pro65 the chain is on the cytoplasmic side. A helical transmembrane segment spans residues Phe66–Ile86. Topologically, residues Leu87 to Thr104 are extracellular. A helical membrane pass occupies residues Ile105–Val128. Over Glu129–Ser149 the chain is Cytoplasmic. The helical transmembrane segment at Ala150 to Ile172 threads the bilayer. The Extracellular portion of the chain corresponds to Asp173–Arg185. Residues Ala186 to Ser206 traverse the membrane as a helical segment. The Cytoplasmic segment spans residues Ser207–Ser224. The chain crosses the membrane as a helical span at residues Lys225 to Arg245. The Extracellular portion of the chain corresponds to Leu246–His263. A helical membrane pass occupies residues Ile264–Gly284. The Cytoplasmic segment spans residues Ser285 to Val325.

The protein belongs to the G-protein coupled receptor 1 family. As to quaternary structure, interacts with AGTR1. Interacts with FLNA (via filamin repeat 21); increases PKA-mediated phosphorylation of FLNA.

The protein resides in the cell membrane. Receptor for angiotensin 1-7. Acts specifically as a functional antagonist of AGTR1 (angiotensin-2 type 1 receptor), although it up-regulates AGTR1 receptor levels. Positive regulation of AGTR1 levels occurs through activation of the G-proteins GNA11 and GNAQ, and stimulation of the protein kinase C signaling cascade. The antagonist effect on AGTR1 function is probably due to AGTR1 being physically altered by MAS1. The protein is Proto-oncogene Mas (MAS1) of Homo sapiens (Human).